Here is a 312-residue protein sequence, read N- to C-terminus: DNA-directed RNA polymerase subunit alpha (312 aa).

Positions Met-1–Thr-226 are alpha N-terminal domain (alpha-NTD). Residues Asn-242 to Lys-312 are alpha C-terminal domain (alpha-CTD).

Belongs to the RNA polymerase alpha chain family. As to quaternary structure, homodimer. The RNAP catalytic core consists of 2 alpha, 1 beta, 1 beta' and 1 omega subunit. When a sigma factor is associated with the core the holoenzyme is formed, which can initiate transcription.

The enzyme catalyses RNA(n) + a ribonucleoside 5'-triphosphate = RNA(n+1) + diphosphate. In terms of biological role, DNA-dependent RNA polymerase catalyzes the transcription of DNA into RNA using the four ribonucleoside triphosphates as substrates. The chain is DNA-directed RNA polymerase subunit alpha from Streptococcus agalactiae serotype Ia (strain ATCC 27591 / A909 / CDC SS700).